The chain runs to 433 residues: UDP-N-acetylmuramoylalanine--D-glutamate ligase (433 aa).

125–131 (GTSGKTT) lines the ATP pocket.

It belongs to the MurCDEF family.

Its subcellular location is the cytoplasm. The catalysed reaction is UDP-N-acetyl-alpha-D-muramoyl-L-alanine + D-glutamate + ATP = UDP-N-acetyl-alpha-D-muramoyl-L-alanyl-D-glutamate + ADP + phosphate + H(+). Its pathway is cell wall biogenesis; peptidoglycan biosynthesis. Its function is as follows. Cell wall formation. Catalyzes the addition of glutamate to the nucleotide precursor UDP-N-acetylmuramoyl-L-alanine (UMA). The polypeptide is UDP-N-acetylmuramoylalanine--D-glutamate ligase (Nitratidesulfovibrio vulgaris (strain ATCC 29579 / DSM 644 / CCUG 34227 / NCIMB 8303 / VKM B-1760 / Hildenborough) (Desulfovibrio vulgaris)).